The sequence spans 563 residues: Tripeptidyl-peptidase 1 (563 aa).

Positions 1–19 (MGLQARFLGLLALVIAGKC) are cleaved as a signal peptide. The propeptide at 20–195 (THSPEPDQRW…PEPQGVGPVG (176 aa)) is removed in mature form. A disulfide bridge links C111 with C122. In terms of domain architecture, Peptidase S53 spans 199-563 (GVTPSVLRQR…PALLKTLLNP (365 aa)). Residues N210 and N222 are each glycosylated (N-linked (GlcNAc...) asparagine). Active-site charge relay system residues include E272 and D276. N-linked (GlcNAc...) asparagine glycans are attached at residues N286, N313, and N443. 2 disulfide bridges follow: C365/C526 and C522/C537. S475 serves as the catalytic Charge relay system. 2 residues coordinate Ca(2+): D517 and V518. Ca(2+) is bound by residues G539, G541, and D543.

As to quaternary structure, monomer. Interacts with CLN5. Interacts with CLN3. Requires Ca(2+) as cofactor. In terms of processing, activated by autocatalytic proteolytical processing upon acidification. N-glycosylation is required for processing and activity.

It is found in the lysosome. The protein resides in the melanosome. The enzyme catalyses Release of an N-terminal tripeptide from a polypeptide, but also has endopeptidase activity.. Its function is as follows. Lysosomal serine protease with tripeptidyl-peptidase I activity. May act as a non-specific lysosomal peptidase which generates tripeptides from the breakdown products produced by lysosomal proteinases. Requires substrates with an unsubstituted N-terminus. The chain is Tripeptidyl-peptidase 1 (Tpp1) from Rattus norvegicus (Rat).